An 843-amino-acid chain; its full sequence is Glycogen phosphorylase, muscle form (843 aa).

Ser2 carries the N-acetylserine modification. A Phosphoserine; by PHK; in form phosphorylase A modification is found at Ser15. AMP is bound by residues Asp43 and Tyr76. Phosphotyrosine occurs at positions 204 and 227. Residue 310-319 participates in AMP binding; sequence RRFKSSKFGC. Ser430 carries the post-translational modification Phosphoserine. Tyr473 carries the phosphotyrosine modification. Ser514 is modified (phosphoserine). Lys681 is subject to N6-(pyridoxal phosphate)lysine. Phosphoserine occurs at positions 747 and 748.

It belongs to the glycogen phosphorylase family. In terms of assembly, homodimer. Homotetramer; to form the enzymatically active phosphorylase A. Pyridoxal 5'-phosphate serves as cofactor. In terms of processing, phosphorylation of Ser-15 converts phosphorylase B (unphosphorylated) to phosphorylase A.

The enzyme catalyses [(1-&gt;4)-alpha-D-glucosyl](n) + phosphate = [(1-&gt;4)-alpha-D-glucosyl](n-1) + alpha-D-glucose 1-phosphate. Its activity is regulated as follows. Allosterically regulated through the non-covalent binding of metabolites, being activated by AMP and inhibited by ATP, ADP, and glucose-6-phosphate. The activity is also controlled by post-translational modifications including phosphorylation. Functionally, allosteric enzyme that catalyzes the rate-limiting step in glycogen catabolism, the phosphorolytic cleavage of glycogen to produce glucose-1-phosphate, and plays a central role in maintaining cellular and organismal glucose homeostasis. In Oryctolagus cuniculus (Rabbit), this protein is Glycogen phosphorylase, muscle form.